The primary structure comprises 52 residues: Large ribosomal subunit protein bL33 (52 aa).

This sequence belongs to the bacterial ribosomal protein bL33 family.

This chain is Large ribosomal subunit protein bL33, found in Helicobacter acinonychis (strain Sheeba).